We begin with the raw amino-acid sequence, 1170 residues long: Error-prone DNA polymerase (1170 aa).

Disordered stretches follow at residues 867-899 (RGAR…LHND) and 1129-1170 (IPHG…RDFH). The span at 886-899 (PRNDNDRQIPLHND) shows a compositional bias: basic and acidic residues.

Belongs to the DNA polymerase type-C family. DnaE2 subfamily.

The protein resides in the cytoplasm. The enzyme catalyses DNA(n) + a 2'-deoxyribonucleoside 5'-triphosphate = DNA(n+1) + diphosphate. Its function is as follows. DNA polymerase involved in damage-induced mutagenesis and translesion synthesis (TLS). It is not the major replicative DNA polymerase. This Bradyrhizobium sp. (strain ORS 278) protein is Error-prone DNA polymerase.